The sequence spans 65 residues: MSLPRNVIPMPRSRFLRVKCIDCGNEQIVFSHPATRVRCLVCGATLVEPTGGKGIVKAKILEVLE.

Positions 20, 23, 39, and 42 each coordinate Zn(2+). The C4-type zinc-finger motif lies at 20–42 (CIDCGNEQIVFSHPATRVRCLVC).

Belongs to the eukaryotic ribosomal protein eS27 family. As to quaternary structure, part of the 30S ribosomal subunit. The cofactor is Zn(2+).

The sequence is that of Small ribosomal subunit protein eS27 from Pyrococcus horikoshii (strain ATCC 700860 / DSM 12428 / JCM 9974 / NBRC 100139 / OT-3).